The sequence spans 441 residues: MSASNYATERETAEGKVFTVTGGDWDVVLSGTDPINDERIVVNMGPQHPSTHGVLRLVLELEGETVRELRSVVGYLHTGIEKNMEFRNWVQGAAFVTRMDYLAPLFNETAYALAVEKLLGIEEQITERATTIRVLMMELNRISSHLVWVATTAMELGAINMMLYGFREREYVLEIFELITGLRMNHAYVRPGGVAQDVPDEAIAKIRDFLELMPKKLAEYEKMLSGQPIWLERTQNVGVLDATGCLAMGVTGPVLRSAGLAWDLRKTMPYCGYETYEFDVPTHTDGDVWGRYLVRLAEIRESLKLVEQAVDRLRPGPVMVADRKIAWPAQLAIGVDGMGNSLEHVAKIMGQSMESLIHHFKLVTEGFRVPPGQVYVGIEAPRGELGVHAVSDGGTRPYRVHYREPSFVNLQALPAMAEGGLIADVIAGGASLDPVMGGCDR.

Belongs to the complex I 49 kDa subunit family. In terms of assembly, NDH-1 is composed of 14 different subunits. Subunits NuoB, C, D, E, F, and G constitute the peripheral sector of the complex.

The protein resides in the cell membrane. The enzyme catalyses a quinone + NADH + 5 H(+)(in) = a quinol + NAD(+) + 4 H(+)(out). NDH-1 shuttles electrons from NADH, via FMN and iron-sulfur (Fe-S) centers, to quinones in the respiratory chain. The immediate electron acceptor for the enzyme in this species is believed to be a menaquinone. Couples the redox reaction to proton translocation (for every two electrons transferred, four hydrogen ions are translocated across the cytoplasmic membrane), and thus conserves the redox energy in a proton gradient. In Salinispora tropica (strain ATCC BAA-916 / DSM 44818 / JCM 13857 / NBRC 105044 / CNB-440), this protein is NADH-quinone oxidoreductase subunit D 1.